Here is a 215-residue protein sequence, read N- to C-terminus: Nascent polypeptide-associated complex subunit alpha (215 aa).

The segment at Met1 to Ser81 is disordered. Polar residues predominate over residues Val9–Glu28. Over residues Ser29 to Asp42 the composition is skewed to acidic residues. Ser43 carries the phosphoserine; by ILK1 modification. A compositionally biased stretch (low complexity) spans Thr44–Ala57. Residues Gln69 to Met80 are required for DNA-binding. Residues Ser70–Ala135 form the NAC-A/B domain. An RNA/DNA-binding region spans residues Arg93–Lys108. At Ser132 the chain carries Phosphoserine. Lys142 is subject to N6-acetyllysine; alternate. A Glycyl lysine isopeptide (Lys-Gly) (interchain with G-Cter in SUMO2); alternate cross-link involves residue Lys142. Thr159 carries the phosphothreonine; by GSK3-beta modification. Phosphothreonine is present on Thr161. Ser166, Ser186, Ser191, and Ser203 each carry phosphoserine. The UBA domain maps to Val176 to Leu213.

The protein belongs to the NAC-alpha family. As to quaternary structure, interacts with TBP and JUN. Part of the nascent polypeptide-associated complex (NAC), which is a heterodimer of NACA and BTF3 (via NAC-A/B domains). NAC associates with ribosomes through the BTF3/NACB subunit and contacts the ribosomal protein L23, which is positioned near the exiting site. Both subunits can contact nascent polypeptide chains. NACA may also form homodimers, and only this form binds DNA. Phosphorylation of Thr-159 by GSK3B may promote proteasome mediated degradation. Phosphorylation of Ser-43 by ILK during cell adhesion may promote nuclear localization. As to expression, ubiquitously expressed.

The protein localises to the cytoplasm. It localises to the nucleus. In terms of biological role, prevents inappropriate targeting of non-secretory polypeptides to the endoplasmic reticulum (ER). Binds to nascent polypeptide chains as they emerge from the ribosome and blocks their interaction with the signal recognition particle (SRP), which normally targets nascent secretory peptides to the ER. Also reduces the inherent affinity of ribosomes for protein translocation sites in the ER membrane (M sites). May act as a specific coactivator for JUN, binding to DNA and stabilizing the interaction of JUN homodimers with target gene promoters. This Homo sapiens (Human) protein is Nascent polypeptide-associated complex subunit alpha (NACA).